A 205-amino-acid chain; its full sequence is Ras-related protein rab-6.2 (205 aa).

Residues 18-25 (EQSVGKTS), Thr42, 66-70 (TAGQE), and 124-127 (KTDL) contribute to the GTP site. 2 S-geranylgeranyl cysteine lipidation sites follow: Cys203 and Cys205. A Cysteine methyl ester modification is found at Cys205.

This sequence belongs to the small GTPase superfamily. Rab family. As to quaternary structure, interacts with GARP complex component vps-52. Interacts (in GTP-bound form) with lin-10. May interact (in GTP-bound form) with eat-17. Highly expressed in body wall muscles, pharyngeal and vulval muscles, hypodermis, intestine, the gonad, coelomocytes, and neurons, including command interneuron (at protein level). Highly expressed in the terminal bulb muscles.

The protein resides in the perikaryon. The protein localises to the cell projection. It is found in the dendrite. It localises to the golgi apparatus. Its subcellular location is the cytoplasmic vesicle. Functionally, the small GTPases Rab are key regulators of intracellular membrane trafficking, from the formation of transport vesicles to their fusion with membranes. Rabs cycle between an inactive GDP-bound form and an active GTP-bound form that is able to recruit to membranes different set of downstream effectors directly responsible for vesicle formation, movement, tethering and fusion. In its active GTP-bound form, acts redundantly with rab-6.1 (in its active GTP-bound form) to positively regulate the retrograde trafficking of cargo molecules from endosomes to the Golgi compartment. Required for the retrograde trafficking of glr-1, a subunit of AMPA-type glutamate receptors (AMPRs), out of early endosomes and into the Golgi compartment in neurons. Its role in glr-1 trafficking may partly be mediated by its interaction with lin-10 and association with components of the retromer complex such as rme-8. Together with rab-6.2, promotes the retrograde trafficking of mig-14 from endosomes to Golgi structures in the intestine. Plays a role in the epidermis to promote cuticle integrity and impermeability of the cuticle barrier to exogenous molecules. May have a role in the glycosylation of the cuticular surface. Required for seam cell division and alae formation. Required for grinder formation, which is the feeding organ that breaks down food. In contrast to rab-6.1, may play a minor role in the exocytosis of secretory vesicles (cortical granules) during the oocyte-to-embryo transition. In Caenorhabditis elegans, this protein is Ras-related protein rab-6.2.